Consider the following 122-residue polypeptide: UPF0102 protein RHE_CH00320 (122 aa).

It belongs to the UPF0102 family.

In Rhizobium etli (strain ATCC 51251 / DSM 11541 / JCM 21823 / NBRC 15573 / CFN 42), this protein is UPF0102 protein RHE_CH00320.